We begin with the raw amino-acid sequence, 116 residues long: Large-conductance mechanosensitive channel (116 aa).

2 helical membrane passes run 7–27 and 64–84; these read EFAL…GAAF and GLFI…FIFV.

This sequence belongs to the MscL family. As to quaternary structure, homopentamer.

The protein resides in the cell membrane. Its function is as follows. Channel that opens in response to stretch forces in the membrane lipid bilayer. May participate in the regulation of osmotic pressure changes within the cell. This is Large-conductance mechanosensitive channel from Staphylococcus epidermidis (strain ATCC 35984 / DSM 28319 / BCRC 17069 / CCUG 31568 / BM 3577 / RP62A).